Here is a 359-residue protein sequence, read N- to C-terminus: Oplophorus-luciferin 2-monooxygenase non-catalytic subunit (359 aa).

The signal sequence occupies residues 1 to 39; it reads MAVNFKFSLLTITIVVNILVYCNASAIKFDVDLEKVPSN. LRR repeat units lie at residues 135-158, 160-180, 181-203, 228-251, 255-278, 280-300, 302-325, and 331-356; these read AATL…EMSQ, TKLN…ALSS, DTLA…AFQT, SPKL…AIKL, GPTT…AVEG, QGIL…VWRP, LENL…MWLI, and LAKI…VFHA.

Heterotetramer of a catalytic 19 kDa and a non-catalytic 35 kDa subunit.

It is found in the secreted. Functionally, non-catalytic subunit of oplophorus-luciferin 2-monooxygenase. May stabilize the active conformation of the catalytic subunit. The polypeptide is Oplophorus-luciferin 2-monooxygenase non-catalytic subunit (Oplophorus gracilirostris (Luminous shrimp)).